The following is a 68-amino-acid chain: DNA-directed RNA polymerase subunit Rpo10 (68 aa).

Residues Cys7, Cys10, Cys44, and Cys45 each coordinate Zn(2+).

The protein belongs to the archaeal Rpo10/eukaryotic RPB10 RNA polymerase subunit family. Part of the RNA polymerase complex. Requires Zn(2+) as cofactor.

The protein resides in the cytoplasm. The catalysed reaction is RNA(n) + a ribonucleoside 5'-triphosphate = RNA(n+1) + diphosphate. In terms of biological role, DNA-dependent RNA polymerase (RNAP) catalyzes the transcription of DNA into RNA using the four ribonucleoside triphosphates as substrates. The sequence is that of DNA-directed RNA polymerase subunit Rpo10 from Methanococcus vannielii (strain ATCC 35089 / DSM 1224 / JCM 13029 / OCM 148 / SB).